The primary structure comprises 242 residues: 3-oxoacyl-[acyl-carrier-protein] reductase FabG (242 aa).

NADP(+) is bound by residues G9–R12, R34, D60–V61, and N87. A substrate-binding site is contributed by S140. Y153 serves as the catalytic Proton acceptor. NADP(+)-binding positions include Y153 to K157 and I186.

It belongs to the short-chain dehydrogenases/reductases (SDR) family. As to quaternary structure, homotetramer.

The catalysed reaction is a (3R)-hydroxyacyl-[ACP] + NADP(+) = a 3-oxoacyl-[ACP] + NADPH + H(+). It participates in lipid metabolism; fatty acid biosynthesis. In terms of biological role, catalyzes the NADPH-dependent reduction of beta-ketoacyl-ACP substrates to beta-hydroxyacyl-ACP products, the first reductive step in the elongation cycle of fatty acid biosynthesis. In Aggregatibacter actinomycetemcomitans (Actinobacillus actinomycetemcomitans), this protein is 3-oxoacyl-[acyl-carrier-protein] reductase FabG (fabG).